The primary structure comprises 474 residues: Gamma-aminobutyric acid receptor subunit beta-1 (474 aa).

Residues 1–25 form the signal peptide; that stretch reads MWTVQNRESLGLLSFPVMIAMVCCA. At 26–245 the chain is on the extracellular side; sequence HSANEPSNMS…SFRLKRNIGY (220 aa). N-linked (GlcNAc...) asparagine glycosylation is found at N33 and N105. Y122 contributes to the histamine binding site. C161 and C175 are joined by a disulfide. Residue N174 is glycosylated (N-linked (GlcNAc...) asparagine). Histamine contacts are provided by residues 181-182 and T227; that span reads SY. Residues Y182 and T227 each coordinate 4-aminobutanoate. A run of 3 helical transmembrane segments spans residues 246 to 267, 271 to 293, and 305 to 327; these read FILQ…SFWI, ASAA…STHL, and AIDI…YAFV. Residues 328 to 451 are Cytoplasmic-facing; it reads NYIFFGKGPQ…DLTDVNSIDK (124 aa). Residues 452–473 form a helical membrane-spanning segment; that stretch reads WSRMFFPITFSLFNVVYWLYYV.

It belongs to the ligand-gated ion channel (TC 1.A.9) family. Gamma-aminobutyric acid receptor (TC 1.A.9.5) subfamily. GABRB1 sub-subfamily. Heteropentamer, formed by a combination of alpha (GABRA1-6), beta (GABRB1-3), gamma (GABRG1-3), delta (GABRD), epsilon (GABRE), rho (GABRR1-3), pi (GABRP) and theta (GABRQ) chains, each subunit exhibiting distinct physiological and pharmacological properties. Binds UBQLN1.

It is found in the postsynaptic cell membrane. The protein localises to the cell membrane. It carries out the reaction chloride(in) = chloride(out). Potentiated by histamine. Beta subunit of the heteropentameric ligand-gated chloride channel gated by gamma-aminobutyric acid (GABA), a major inhibitory neurotransmitter in the brain. GABA-gated chloride channels, also named GABA(A) receptors (GABAAR), consist of five subunits arranged around a central pore and contain GABA active binding site(s) located at the alpha and beta subunit interface(s). When activated by GABA, GABAARs selectively allow the flow of chloride anions across the cell membrane down their electrochemical gradient. Chloride influx into the postsynaptic neuron following GABAAR opening decreases the neuron ability to generate a new action potential, thereby reducing nerve transmission. Beta-containing GABAARs can simultaneously bind GABA and histamine where histamine binds at the interface of two neighboring beta subunits, which may be involved in the regulation of sleep and wakefulness. In Bos taurus (Bovine), this protein is Gamma-aminobutyric acid receptor subunit beta-1 (GABRB1).